The sequence spans 174 residues: Co-chaperone protein HscB homolog (174 aa).

Positions 2–74 (NYFELFKFSP…IRRAEHMLSL (73 aa)) constitute a J domain.

Belongs to the HscB family. Interacts with HscA and stimulates its ATPase activity.

In terms of biological role, co-chaperone involved in the maturation of iron-sulfur cluster-containing proteins. Seems to help targeting proteins to be folded toward HscA. This chain is Co-chaperone protein HscB homolog, found in Shewanella baltica (strain OS155 / ATCC BAA-1091).